The sequence spans 198 residues: Clytin (198 aa).

The propeptide occupies 1 to 9; that stretch reads MADTASKYA. EF-hand domains are found at residues 20-55, 60-95, 119-148, and 149-184; these read KWVN…DICA, TPEQ…VDGW, EAVF…SGIC, and SSDE…FWYT. Ca(2+) contacts are provided by aspartate 33, asparagine 35, aspartate 37, lysine 39, and glutamate 44. Ca(2+) is bound by residues aspartate 126, aspartate 128, serine 130, serine 132, glutamate 137, aspartate 162, aspartate 164, serine 166, lysine 168, and glutamate 173.

Belongs to the aequorin family.

In terms of biological role, ca(2+)-dependent bioluminescence photoprotein. Displays an emission peak at 470 nm (blue light). Trace amounts of calcium ion trigger the intramolecular oxidation of the chromophore, coelenterazine into coelenteramide and CO(2) with the concomitant emission of light. The protein is Clytin of Clytia gregaria (Gregarious jellyfish).